The chain runs to 274 residues: Large ribosomal subunit protein uL2 (274 aa).

Residues 223-274 (VAMNPVDHPHGGGEGRTSGGRHPVTPWGVPTKGYKTRSNKRTDKYIVRRRNK) form a disordered region.

It belongs to the universal ribosomal protein uL2 family. In terms of assembly, part of the 50S ribosomal subunit. Forms a bridge to the 30S subunit in the 70S ribosome.

Functionally, one of the primary rRNA binding proteins. Required for association of the 30S and 50S subunits to form the 70S ribosome, for tRNA binding and peptide bond formation. It has been suggested to have peptidyltransferase activity; this is somewhat controversial. Makes several contacts with the 16S rRNA in the 70S ribosome. The sequence is that of Large ribosomal subunit protein uL2 from Shewanella baltica (strain OS223).